Here is a 338-residue protein sequence, read N- to C-terminus: DNA-directed RNA polymerase subunit alpha (338 aa).

The tract at residues 1-234 is alpha N-terminal domain (alpha-NTD); it reads MIQKNWQELI…DQLNVFVNFE (234 aa). The alpha C-terminal domain (alpha-CTD) stretch occupies residues 250–338; it reads FNPALLKKVD…ELAKRFEEHY (89 aa).

It belongs to the RNA polymerase alpha chain family. Homodimer. The RNAP catalytic core consists of 2 alpha, 1 beta, 1 beta' and 1 omega subunit. When a sigma factor is associated with the core the holoenzyme is formed, which can initiate transcription.

It catalyses the reaction RNA(n) + a ribonucleoside 5'-triphosphate = RNA(n+1) + diphosphate. Its function is as follows. DNA-dependent RNA polymerase catalyzes the transcription of DNA into RNA using the four ribonucleoside triphosphates as substrates. In Beijerinckia indica subsp. indica (strain ATCC 9039 / DSM 1715 / NCIMB 8712), this protein is DNA-directed RNA polymerase subunit alpha.